The primary structure comprises 424 residues: UDP-sugar transporter protein SLC35A5 (424 aa).

At 1–8 (MEKQCCSH) the chain is on the cytoplasmic side. A helical membrane pass occupies residues 9–29 (PVICSLSTMYTFLLGAIFIAL). Topologically, residues 30–53 (SSSRILLVKYSANEENKYDYLPTT) are lumenal. A helical transmembrane segment spans residues 54–74 (VNVCSELVKLVFCVLVSFCVI). At 75-93 (KKDHQSRNLKYASWKEFSD) the chain is on the cytoplasmic side. Residues 94–116 (FMKWSIPAFLYFLDNLIVFYVLS) traverse the membrane as a helical segment. At 117-119 (YLQ) the chain is on the lumenal side. The helical transmembrane segment at 120 to 142 (PAMAVIFSNFSIITTALLFRIVL) threads the bilayer. At 143–147 (KRRLN) the chain is on the cytoplasmic side. A helical membrane pass occupies residues 148 to 168 (WIQWASLLTLFLSIVALTAGT). Residues 169-228 (KTLQHNLAGRGFHHDAFFSPSNSCLLFRSECPRKDNCTAKEWTFPEAKWNTTARVFSHIR) are Lumenal-facing. N-linked (GlcNAc...) asparagine glycosylation occurs at Asn-204. The chain crosses the membrane as a helical span at residues 229 to 249 (LGMGHVLIIVQCFISSMANIY). At 250-263 (NEKILKEGNQLTES) the chain is on the cytoplasmic side. Residues 264 to 284 (IFIQNSKLYFFGILFNGLTLG) traverse the membrane as a helical segment. The Lumenal portion of the chain corresponds to 285–303 (LQRSNRDQIKNCGFFYGHS). A helical transmembrane segment spans residues 304–324 (AFSVALIFVTAFQGLSVAFIL). The Cytoplasmic portion of the chain corresponds to 325–330 (KFLDNM). Residues 331–351 (FHVLMAQVTTVIITTVSVLVF) traverse the membrane as a helical segment. The Lumenal portion of the chain corresponds to 352–354 (DFR). The helical transmembrane segment at 355-375 (PSLEFFLEAPSVLLSIFIYNA) threads the bilayer. Over 376–424 (SKPQVPEYAPRQERIRDLSGNLWERSSGDGEELERLTKPKSDESDEDTF) the chain is Cytoplasmic. 3 positions are modified to phosphoserine: Ser-394, Ser-416, and Ser-419. The segment at 397–424 (LWERSSGDGEELERLTKPKSDESDEDTF) is disordered. Residues 408–417 (LERLTKPKSD) show a composition bias toward basic and acidic residues.

Belongs to the nucleotide-sugar transporter family. SLC35A subfamily. In terms of assembly, probably forms homooligomers and heterooligomers with SLC35A1, SLC35A2, SLC35A3 and SLC35A4.

The protein resides in the golgi apparatus membrane. The enzyme catalyses UMP(out) + UDP-alpha-D-glucuronate(in) = UMP(in) + UDP-alpha-D-glucuronate(out). The catalysed reaction is UMP(out) + UDP-N-acetyl-alpha-D-glucosamine(in) = UMP(in) + UDP-N-acetyl-alpha-D-glucosamine(out). It catalyses the reaction UDP-N-acetyl-alpha-D-galactosamine(in) + UMP(out) = UDP-N-acetyl-alpha-D-galactosamine(out) + UMP(in). Probable UDP-sugar:UMP transmembrane antiporter involved in UDP-alpha-D-glucuronate/UDP-GlcA, UDP-GlcNAc/UDP-N-acetyl-alpha-D-glucosamine and UDP-N-acetyl-alpha-D-galactosamine/UDP-GalNAc transport from the cytosol to the lumen of the Golgi. This Homo sapiens (Human) protein is UDP-sugar transporter protein SLC35A5.